A 570-amino-acid chain; its full sequence is Proline--tRNA ligase (570 aa).

This sequence belongs to the class-II aminoacyl-tRNA synthetase family. ProS type 1 subfamily. As to quaternary structure, homodimer.

Its subcellular location is the cytoplasm. It catalyses the reaction tRNA(Pro) + L-proline + ATP = L-prolyl-tRNA(Pro) + AMP + diphosphate. Its function is as follows. Catalyzes the attachment of proline to tRNA(Pro) in a two-step reaction: proline is first activated by ATP to form Pro-AMP and then transferred to the acceptor end of tRNA(Pro). As ProRS can inadvertently accommodate and process non-cognate amino acids such as alanine and cysteine, to avoid such errors it has two additional distinct editing activities against alanine. One activity is designated as 'pretransfer' editing and involves the tRNA(Pro)-independent hydrolysis of activated Ala-AMP. The other activity is designated 'posttransfer' editing and involves deacylation of mischarged Ala-tRNA(Pro). The misacylated Cys-tRNA(Pro) is not edited by ProRS. This is Proline--tRNA ligase from Neisseria meningitidis serogroup A / serotype 4A (strain DSM 15465 / Z2491).